The sequence spans 370 residues: Homospermidine synthase 1 (370 aa).

Belongs to the deoxyhypusine synthase family. As to quaternary structure, homotetramer. NAD(+) is required as a cofactor. In terms of processing, the N-terminus is blocked. As to expression, expressed in roots.

It catalyses the reaction putrescine + spermidine = sym-homospermidine + propane-1,3-diamine. Its pathway is alkaloid biosynthesis; pyrrolizidine alkaloid biosynthesis. Functionally, catalyzes the transfer of an aminobutyl unit from spermidine onto putrescine. The resulting polyamine homospermidine is a precursor in the biosynthesis of pyrrolizidine alkaloids. The sequence is that of Homospermidine synthase 1 (HSS1) from Senecio vernalis (Spring groundsel).